The sequence spans 308 residues: Eukaryotic translation initiation factor 3 subunit G (308 aa).

The interval 1–23 (MAPVAAPSTSQPAGGKPMNWADE) is disordered. Residues 225-303 (PTLRVTNLSE…LILSCQWSLP (79 aa)) enclose the RRM domain.

It belongs to the eIF-3 subunit G family. As to quaternary structure, component of the eukaryotic translation initiation factor 3 (eIF-3) complex.

Its subcellular location is the cytoplasm. Its function is as follows. RNA-binding component of the eukaryotic translation initiation factor 3 (eIF-3) complex, which is involved in protein synthesis of a specialized repertoire of mRNAs and, together with other initiation factors, stimulates binding of mRNA and methionyl-tRNAi to the 40S ribosome. The eIF-3 complex specifically targets and initiates translation of a subset of mRNAs involved in cell proliferation. This subunit can bind 18S rRNA. In Mycosarcoma maydis (Corn smut fungus), this protein is Eukaryotic translation initiation factor 3 subunit G.